The sequence spans 177 residues: Large ribosomal subunit protein uL6 (177 aa).

It belongs to the universal ribosomal protein uL6 family. In terms of assembly, part of the 50S ribosomal subunit.

Its function is as follows. This protein binds to the 23S rRNA, and is important in its secondary structure. It is located near the subunit interface in the base of the L7/L12 stalk, and near the tRNA binding site of the peptidyltransferase center. This Herminiimonas arsenicoxydans protein is Large ribosomal subunit protein uL6.